Consider the following 1316-residue polypeptide: DNA-directed RNA polymerase subunit beta' (1316 aa).

Residues C60, C62, C75, and C78 each contribute to the Zn(2+) site. Residues D535, D537, and D539 each coordinate Mg(2+). Zn(2+) is bound by residues C891, C968, C975, and C978.

It belongs to the RNA polymerase beta' chain family. The RNAP catalytic core consists of 2 alpha, 1 beta, 1 beta' and 1 omega subunit. When a sigma factor is associated with the core the holoenzyme is formed, which can initiate transcription. It depends on Mg(2+) as a cofactor. Zn(2+) serves as cofactor.

It carries out the reaction RNA(n) + a ribonucleoside 5'-triphosphate = RNA(n+1) + diphosphate. Functionally, DNA-dependent RNA polymerase catalyzes the transcription of DNA into RNA using the four ribonucleoside triphosphates as substrates. In Mycolicibacterium paratuberculosis (strain ATCC BAA-968 / K-10) (Mycobacterium paratuberculosis), this protein is DNA-directed RNA polymerase subunit beta'.